A 430-amino-acid chain; its full sequence is Gamma-glutamyl phosphate reductase (430 aa).

The protein belongs to the gamma-glutamyl phosphate reductase family.

Its subcellular location is the cytoplasm. The enzyme catalyses L-glutamate 5-semialdehyde + phosphate + NADP(+) = L-glutamyl 5-phosphate + NADPH + H(+). The protein operates within amino-acid biosynthesis; L-proline biosynthesis; L-glutamate 5-semialdehyde from L-glutamate: step 2/2. Catalyzes the NADPH-dependent reduction of L-glutamate 5-phosphate into L-glutamate 5-semialdehyde and phosphate. The product spontaneously undergoes cyclization to form 1-pyrroline-5-carboxylate. This Rhodopseudomonas palustris (strain HaA2) protein is Gamma-glutamyl phosphate reductase.